The following is a 63-amino-acid chain: Large ribosomal subunit protein bL28 (63 aa).

The tract at residues 1–20 (MSRRCAITGKGPMVGNNVSH) is disordered.

This sequence belongs to the bacterial ribosomal protein bL28 family.

The protein is Large ribosomal subunit protein bL28 of Campylobacter curvus (strain 525.92).